The chain runs to 432 residues: Glutamate-1-semialdehyde 2,1-aminomutase (432 aa).

Lys-267 carries the N6-(pyridoxal phosphate)lysine modification.

It belongs to the class-III pyridoxal-phosphate-dependent aminotransferase family. HemL subfamily. In terms of assembly, homodimer. It depends on pyridoxal 5'-phosphate as a cofactor.

It localises to the cytoplasm. The enzyme catalyses (S)-4-amino-5-oxopentanoate = 5-aminolevulinate. It functions in the pathway porphyrin-containing compound metabolism; protoporphyrin-IX biosynthesis; 5-aminolevulinate from L-glutamyl-tRNA(Glu): step 2/2. In Syntrophus aciditrophicus (strain SB), this protein is Glutamate-1-semialdehyde 2,1-aminomutase.